A 41-amino-acid polypeptide reads, in one-letter code: M-factor (41 aa).

The disordered stretch occupies residues Met1 to Lys25. The propeptide occupies Met1–Asn29. Cys38 bears the Cysteine methyl ester mark. Cys38 carries the S-farnesyl cysteine lipid modification. Positions Val39–Ala41 are cleaved as a propeptide — removed in mature form.

The protein resides in the secreted. Functionally, M-factor is a mating pheromone produced by M-type mating cells. All three mfm genes contribute to the production of M-factor. In Schizosaccharomyces pombe (strain 972 / ATCC 24843) (Fission yeast), this protein is M-factor (mfm3).